A 78-amino-acid chain; its full sequence is Pigment-dispersing hormone 2 peptides (78 aa).

Positions 1 to 21 are cleaved as a signal peptide; the sequence is MRSGVFVAVLVVVVFALLTQG. Residue alanine 75 is modified to Alanine amide.

The protein belongs to the arthropod PDH family. In terms of tissue distribution, eyestalk sinus gland.

It localises to the secreted. The pigment-dispersing hormone causes the migration of the distal retinal pigment into the proximal end of the pigment chromatophore cells and thus decreases the amount of light entering the retinulas. May also function as a neurotransmitter and/or neuromodulator. The protein is Pigment-dispersing hormone 2 peptides (PDH2) of Callinectes sapidus (Blue crab).